The primary structure comprises 172 residues: Adenine phosphoribosyltransferase (172 aa).

It belongs to the purine/pyrimidine phosphoribosyltransferase family. Homodimer.

It localises to the cytoplasm. The enzyme catalyses AMP + diphosphate = 5-phospho-alpha-D-ribose 1-diphosphate + adenine. Its pathway is purine metabolism; AMP biosynthesis via salvage pathway; AMP from adenine: step 1/1. In terms of biological role, catalyzes a salvage reaction resulting in the formation of AMP, that is energically less costly than de novo synthesis. In Desulforamulus reducens (strain ATCC BAA-1160 / DSM 100696 / MI-1) (Desulfotomaculum reducens), this protein is Adenine phosphoribosyltransferase.